The primary structure comprises 465 residues: MTSKLVISALGLCVSGALSTTLASTPATTNQQITKRIDYLQAQINELRTQQKKERQKKKAPYRKCSKKSCKYHSSRLSIGPYLHKTPAFDGSDLIINVPTVREDARLLLLQHQLEEECRALGVPLPEMPRVVFSGKLEGQTSYGSTYAGSRNANINFSGAEFDTYVQANPWVSGYMALDYDPDELADGSRVFMNRAFIMIGNLSRFPFYTSIGQVYVPFGRYSSMMITTPVTQALGRTRARAITLGYQQTGNNALHAELYGYQGLTNNFSRSNHNDQWGTDVGYEFSNGDRVSGEIGASFISNLADSQGMQATAFLDNETLRHRVSALGVYGSLAIKPVVFIAEYISALKSFDINDVNFANRGARPTAFHTEANYTFKTGSKPSSIGIGYGHTSQALGVGLPQDRYSVFYNVNIWKDTNFALEYRHDVNYTRNAISTGTNPTPAKVVADLGKSDNVVTAQFDLYF.

Residues 1–23 form the signal peptide; the sequence is MTSKLVISALGLCVSGALSTTLA. Residues 28–60 adopt a coiled-coil conformation; sequence TTNQQITKRIDYLQAQINELRTQQKKERQKKKA.

This sequence belongs to the UPF0422 family.

This is UPF0422 protein CBU_0937 from Coxiella burnetii (strain RSA 493 / Nine Mile phase I).